The primary structure comprises 213 residues: Large ribosomal subunit protein uL1 (213 aa).

The protein belongs to the universal ribosomal protein uL1 family. In terms of assembly, part of the 50S ribosomal subunit.

In terms of biological role, binds directly to 23S rRNA. Probably involved in E site tRNA release. Functionally, protein L1 is also a translational repressor protein, it controls the translation of its operon by binding to its mRNA. The polypeptide is Large ribosomal subunit protein uL1 (Methanocella arvoryzae (strain DSM 22066 / NBRC 105507 / MRE50)).